The chain runs to 464 residues: tRNA(Ile)-lysidine synthase (464 aa).

26–31 is an ATP binding site; that stretch reads SGGPDS.

Belongs to the tRNA(Ile)-lysidine synthase family.

The protein localises to the cytoplasm. The enzyme catalyses cytidine(34) in tRNA(Ile2) + L-lysine + ATP = lysidine(34) in tRNA(Ile2) + AMP + diphosphate + H(+). Functionally, ligates lysine onto the cytidine present at position 34 of the AUA codon-specific tRNA(Ile) that contains the anticodon CAU, in an ATP-dependent manner. Cytidine is converted to lysidine, thus changing the amino acid specificity of the tRNA from methionine to isoleucine. The chain is tRNA(Ile)-lysidine synthase from Geobacillus kaustophilus (strain HTA426).